Consider the following 211-residue polypeptide: Adenylate kinase (211 aa).

An ATP-binding site is contributed by 10–15; the sequence is GSGKGT. The tract at residues 30–59 is NMP; sequence STGDLFRENILNSTTLGKEIKKIVEKGELV. AMP contacts are provided by residues Thr-31, Arg-36, 57–59, 85–88, and Gln-92; these read ELV and GFPR. The interval 121–158 is LID; that stretch reads GRRICKSCNNIFNIYTLATKKNGICDVCKGDLYQREDD. Arg-122 is an ATP binding site. Cys-125 and Cys-128 together coordinate Zn(2+). 131–132 serves as a coordination point for ATP; the sequence is IF. Zn(2+)-binding residues include Cys-145 and Cys-148. Residues Arg-155 and Arg-166 each contribute to the AMP site. An ATP-binding site is contributed by Val-194.

It belongs to the adenylate kinase family. As to quaternary structure, monomer.

It is found in the cytoplasm. The catalysed reaction is AMP + ATP = 2 ADP. It participates in purine metabolism; AMP biosynthesis via salvage pathway; AMP from ADP: step 1/1. Its function is as follows. Catalyzes the reversible transfer of the terminal phosphate group between ATP and AMP. Plays an important role in cellular energy homeostasis and in adenine nucleotide metabolism. The protein is Adenylate kinase of Borrelia garinii subsp. bavariensis (strain ATCC BAA-2496 / DSM 23469 / PBi) (Borreliella bavariensis).